The sequence spans 261 residues: Ribonuclease HII (261 aa).

The region spanning 71–259 (KYIAGVDEVG…VKESKLHFDS (189 aa)) is the RNase H type-2 domain. A divalent metal cation-binding residues include D77, E78, and D169.

It belongs to the RNase HII family. The cofactor is Mn(2+). Mg(2+) serves as cofactor.

It is found in the cytoplasm. It carries out the reaction Endonucleolytic cleavage to 5'-phosphomonoester.. Its function is as follows. Endonuclease that specifically degrades the RNA of RNA-DNA hybrids. This chain is Ribonuclease HII, found in Listeria monocytogenes serovar 1/2a (strain ATCC BAA-679 / EGD-e).